The following is a 453-amino-acid chain: Bifunctional protein GlmU (453 aa).

The pyrophosphorylase stretch occupies residues 1-227 (MNKLSVVILA…LMEVEGVNNR (227 aa)). UDP-N-acetyl-alpha-D-glucosamine contacts are provided by residues 9 to 12 (LAAG), Lys23, Gln74, 79 to 80 (GT), 101 to 103 (YGD), Gly138, Glu152, Asn167, and Asn225. Asp103 provides a ligand contact to Mg(2+). A Mg(2+)-binding site is contributed by Asn225. The linker stretch occupies residues 228-248 (LQLANLERHFQRKQVEKLLLA). The N-acetyltransferase stretch occupies residues 249–453 (GVTFADPARF…ISNWQRPKRK (205 aa)). 2 residues coordinate UDP-N-acetyl-alpha-D-glucosamine: Arg331 and Lys349. His361 functions as the Proton acceptor in the catalytic mechanism. Positions 364 and 375 each coordinate UDP-N-acetyl-alpha-D-glucosamine. Acetyl-CoA-binding positions include Ala378, 384-385 (NY), Ser403, Ala421, and Arg438.

This sequence in the N-terminal section; belongs to the N-acetylglucosamine-1-phosphate uridyltransferase family. In the C-terminal section; belongs to the transferase hexapeptide repeat family. As to quaternary structure, homotrimer. The cofactor is Mg(2+).

The protein resides in the cytoplasm. It carries out the reaction alpha-D-glucosamine 1-phosphate + acetyl-CoA = N-acetyl-alpha-D-glucosamine 1-phosphate + CoA + H(+). The enzyme catalyses N-acetyl-alpha-D-glucosamine 1-phosphate + UTP + H(+) = UDP-N-acetyl-alpha-D-glucosamine + diphosphate. Its pathway is nucleotide-sugar biosynthesis; UDP-N-acetyl-alpha-D-glucosamine biosynthesis; N-acetyl-alpha-D-glucosamine 1-phosphate from alpha-D-glucosamine 6-phosphate (route II): step 2/2. It participates in nucleotide-sugar biosynthesis; UDP-N-acetyl-alpha-D-glucosamine biosynthesis; UDP-N-acetyl-alpha-D-glucosamine from N-acetyl-alpha-D-glucosamine 1-phosphate: step 1/1. The protein operates within bacterial outer membrane biogenesis; LPS lipid A biosynthesis. In terms of biological role, catalyzes the last two sequential reactions in the de novo biosynthetic pathway for UDP-N-acetylglucosamine (UDP-GlcNAc). The C-terminal domain catalyzes the transfer of acetyl group from acetyl coenzyme A to glucosamine-1-phosphate (GlcN-1-P) to produce N-acetylglucosamine-1-phosphate (GlcNAc-1-P), which is converted into UDP-GlcNAc by the transfer of uridine 5-monophosphate (from uridine 5-triphosphate), a reaction catalyzed by the N-terminal domain. The protein is Bifunctional protein GlmU of Histophilus somni (strain 129Pt) (Haemophilus somnus).